A 1071-amino-acid chain; its full sequence is ATP-dependent helicase/deoxyribonuclease subunit B (1071 aa).

Belongs to the helicase family. AddB/RexB type 2 subfamily. In terms of assembly, heterodimer of AddA and RexB. Mg(2+) is required as a cofactor.

Functionally, the heterodimer acts as both an ATP-dependent DNA helicase and an ATP-dependent, dual-direction single-stranded exonuclease. Recognizes the chi site generating a DNA molecule suitable for the initiation of homologous recombination. This subunit has 5' -&gt; 3' nuclease activity but not helicase activity. The chain is ATP-dependent helicase/deoxyribonuclease subunit B from Streptococcus pyogenes serotype M49 (strain NZ131).